The sequence spans 119 residues: Gas vesicle protein O1 (119 aa).

Positions Met-1–Glu-12 are enriched in basic and acidic residues. The disordered stretch occupies residues Met-1–Ala-48. Positions Gly-26–Thr-42 are enriched in polar residues.

It belongs to the gas vesicle GvpO family. Forms homodimers, forms a GvpN1-GvpO1 heterodimer, interacts with GvpC1 (via the latter's C-terminus), GvpF1, GvpI1 and GvpL1, might interact with GvpA1.

The protein localises to the gas vesicle. It localises to the cytoplasm. A minor component of the gas vesicle, also found in soluble extracts. May play a role in transcription and/or RNA stability and in GV assembly. Gas vesicles are hollow, gas filled proteinaceous nanostructures found in several microbial planktonic microorganisms. They allow positioning of halobacteria at the optimal depth for growth in the poorly aerated, shallow brine pools of their habitat. Its function is as follows. Expression of a 9.5 kb p-vac DNA fragment containing 2 divergently transcribed regions (gvpD-gvpE-gvpF-gvpG-gvpH-gvpI-gvpJ-gvpK-gvpL-gvpM and gvpA-gvpC-gvpN-gvpO) allows H.volcanii to produce gas vesicles. A minimal gas vesicle can be made in H.volcanii by gvpA1-gvpO1 gvpF1-gvpG1-gvpJ1-gvpK1-gvpL1-gvpM1; lack of enough GvpJ1 prevents formation. The same region restores gas vesicle production in H.halobium without the p-vac locus, but it still has the c-vac locus. This is Gas vesicle protein O1 from Halobacterium salinarum (strain ATCC 700922 / JCM 11081 / NRC-1) (Halobacterium halobium).